We begin with the raw amino-acid sequence, 384 residues long: 4-hydroxy-3-methylbut-2-en-1-yl diphosphate synthase (flavodoxin) (384 aa).

[4Fe-4S] cluster contacts are provided by C280, C283, C315, and E322.

It belongs to the IspG family. The cofactor is [4Fe-4S] cluster.

The enzyme catalyses (2E)-4-hydroxy-3-methylbut-2-enyl diphosphate + oxidized [flavodoxin] + H2O + 2 H(+) = 2-C-methyl-D-erythritol 2,4-cyclic diphosphate + reduced [flavodoxin]. It participates in isoprenoid biosynthesis; isopentenyl diphosphate biosynthesis via DXP pathway; isopentenyl diphosphate from 1-deoxy-D-xylulose 5-phosphate: step 5/6. In terms of biological role, converts 2C-methyl-D-erythritol 2,4-cyclodiphosphate (ME-2,4cPP) into 1-hydroxy-2-methyl-2-(E)-butenyl 4-diphosphate. This Parafrankia sp. (strain EAN1pec) protein is 4-hydroxy-3-methylbut-2-en-1-yl diphosphate synthase (flavodoxin).